The following is a 378-amino-acid chain: TelA-like protein SAS1347 (378 aa).

It belongs to the TelA family.

The chain is TelA-like protein SAS1347 from Staphylococcus aureus (strain MSSA476).